A 432-amino-acid chain; its full sequence is Cyclic GMP-AMP synthase (432 aa).

110 to 115 is a binding site for GTP; the sequence is QGSFQY. Mg(2+)-binding residues include aspartate 129 and aspartate 131. An ATP-binding site is contributed by arginine 180. Aspartate 191 serves as a coordination point for Mg(2+). Residue serine 255 participates in ATP binding. Positions 283, 297, and 344 each coordinate GTP. A Glycyl cysteine dithioester (Gly-Cys) (interchain with C-13 in Cap2) cross-link involves residue glycine 432. A Glycyl cysteine dithioester (Gly-Cys) (interchain with C-493 in Cap2) cross-link involves residue glycine 432. Residue glycine 432 forms a Glycyl cysteine dithioester (Gly-Cys) (interchain with C-513 in Cap2) linkage. Glycine 432 is covalently cross-linked (Glycyl lysine isopeptide (Gly-Lys) (interchain with K-? in acceptor proteins)).

It belongs to the CD-NTase family. A02 subfamily. As to quaternary structure, a Cap2 dimer is bound on either side by a DncV monomer. The cofactor is Mg(2+). In bacteria expressing capV-dncV-cap2-cap3, this protein is conjugated to about 130 cellular proteins by Cap2, most of which are involved in metabolism; more conjugated protein is found in the absence of Cap3. Most conjugation occurs via an isopeptide bond with the epsilon-amine of Lys on the target protein, but Cys-conjugation also occurs, including to Cap2. Conjugation or deconjugation from cellular proteins does not change the DncV activity in vitro, but does so in vivo during infection. In terms of processing, (Microbial infection) During phage T4 infection is conjugated to at least 2 T4 proteins (fibritin (wac) and dexA.2).

The enzyme catalyses GTP + ATP = 3',3'-cGAMP + 2 diphosphate. Its activity is regulated as follows. Primed for activation by Cap2 which conjugates it to cellular proteins. cGAMP production is induced in phage T4 infected cells in a manner that requires Cap2 and Cap3, as well as a C-terminal Ala or Gly residue in this protein. Cyclic nucleotide synthase (second messenger synthase) of a CBASS antivirus system. CBASS (cyclic oligonucleotide-based antiphage signaling system) provides immunity against bacteriophages. The CD-NTase protein (DncV, this protein) synthesizes cyclic nucleotides in response to infection; these serve as specific second messenger signals. The signals activate a diverse range of effectors, leading to bacterial cell death and thus abortive phage infection. A type II-A(GA) CBASS system. Functionally, catalyzes the synthesis of 3',3'-cyclic GMP-AMP (cGAMP) from GTP and ATP, a second messenger in cell signal transduction. Its product controls the activity of cGAMP-activated phospholipase CapV, a patatin-like lipase that is a direct cGAMP receptor encoded in the dncV operon. In terms of biological role, protects E.coli against phage infection. When capV and dncV are introduced in E.coli MG1655 there is 1000-fold protection against phage P1; protection against other phage (T2, T4, T5, T6 and lambda-vir) requires the 2 subsequent genes (cap2 and cap3). In another paper the capV-dncV-cap2-cap3 operon gives 10(4)-10(5)-fold protection against phages lambda, T2, T4 and T6, about 1000-fold protection against P1 and 10-fold protection against T5. The polypeptide is Cyclic GMP-AMP synthase (Escherichia coli (strain TW11681)).